Consider the following 177-residue polypeptide: Adenine phosphoribosyltransferase (177 aa).

The protein belongs to the purine/pyrimidine phosphoribosyltransferase family. In terms of assembly, homodimer.

Its subcellular location is the cytoplasm. The enzyme catalyses AMP + diphosphate = 5-phospho-alpha-D-ribose 1-diphosphate + adenine. It functions in the pathway purine metabolism; AMP biosynthesis via salvage pathway; AMP from adenine: step 1/1. In terms of biological role, catalyzes a salvage reaction resulting in the formation of AMP, that is energically less costly than de novo synthesis. This Mycobacteroides abscessus (strain ATCC 19977 / DSM 44196 / CCUG 20993 / CIP 104536 / JCM 13569 / NCTC 13031 / TMC 1543 / L948) (Mycobacterium abscessus) protein is Adenine phosphoribosyltransferase.